Here is a 170-residue protein sequence, read N- to C-terminus: VIP peptides (170 aa).

The signal sequence occupies residues 1 to 21 (MEARSKPQFLAFLILFSVLFS). The propeptide occupies 22 to 79 (QSLAWPLFGPPSVVRLDDRMPFEGAGDPDQVSLKADSDILQNPLAENGTPYYDVSRNA). At Ser76 the chain carries Phosphoserine. At Ile107 the chain carries Isoleucine amide. An N-linked (GlcNAc...) asparagine glycan is attached at Asn133. Asn152 is subject to Asparagine amide. A propeptide spanning residues 156–170 (SSEGDSADFLEELEK) is cleaved from the precursor.

This sequence belongs to the glucagon family.

The protein resides in the secreted. VIP is a neuropeptide involved in a diverse array of physiological processes through activating the PACAP subfamily of class B1 G protein-coupled receptors: VIP receptor 1 (VPR1) and VIP receptor 2 (VPR2). Abundantly expressed throughout the CNS and peripheral nervous systems where they primarily exert neuroprotective and immune modulatory roles. Also causes vasodilation, lowers arterial blood pressure, stimulates myocardial contractility, increases glycogenolysis and relaxes the smooth muscle of trachea, stomach and gall bladder. Functionally, PHM-27 and PHV-42 are two bioactive forms from proteolysis of the same precursor protein, that cause vasodilation. PHM-27 is a potent agonist of the calcitonin receptor CALCR, with similar efficacy as calcitonin. The polypeptide is VIP peptides (Vip) (Mus musculus (Mouse)).